The primary structure comprises 222 residues: UPF0758 protein YE0063 (222 aa).

Positions 100–222 (VLQNPEITQK…CVSFAERGWL (123 aa)) constitute an MPN domain. The Zn(2+) site is built by His-171, His-173, and Asp-184. Residues 171–184 (HNHPSGKAEPSQAD) carry the JAMM motif motif.

This sequence belongs to the UPF0758 family. YicR subfamily.

This is UPF0758 protein YE0063 from Yersinia enterocolitica serotype O:8 / biotype 1B (strain NCTC 13174 / 8081).